A 283-amino-acid polypeptide reads, in one-letter code: Diaminopimelate epimerase (283 aa).

Substrate-binding residues include N11 and N65. Catalysis depends on C74, which acts as the Proton donor. Substrate-binding positions include 75–76, N163, N196, and 214–215; these read GN and ER. C223 (proton acceptor) is an active-site residue. Position 224–225 (224–225) interacts with substrate; that stretch reads GT.

It belongs to the diaminopimelate epimerase family. In terms of assembly, homodimer.

The protein localises to the cytoplasm. It carries out the reaction (2S,6S)-2,6-diaminopimelate = meso-2,6-diaminopimelate. It functions in the pathway amino-acid biosynthesis; L-lysine biosynthesis via DAP pathway; DL-2,6-diaminopimelate from LL-2,6-diaminopimelate: step 1/1. Catalyzes the stereoinversion of LL-2,6-diaminopimelate (L,L-DAP) to meso-diaminopimelate (meso-DAP), a precursor of L-lysine and an essential component of the bacterial peptidoglycan. The sequence is that of Diaminopimelate epimerase from Desulfitobacterium hafniense (strain DSM 10664 / DCB-2).